Consider the following 585-residue polypeptide: Arginine--tRNA ligase (585 aa).

Positions 131–141 (ANPTGPMHVGH) match the 'HIGH' region motif.

This sequence belongs to the class-I aminoacyl-tRNA synthetase family. Monomer.

It localises to the cytoplasm. The enzyme catalyses tRNA(Arg) + L-arginine + ATP = L-arginyl-tRNA(Arg) + AMP + diphosphate. The protein is Arginine--tRNA ligase of Sinorhizobium medicae (strain WSM419) (Ensifer medicae).